A 183-amino-acid chain; its full sequence is Orotate phosphoribosyltransferase (183 aa).

Residues Arg100, Lys101, Lys104, His106, and 126–134 (EDVVTTGSS) contribute to the 5-phospho-alpha-D-ribose 1-diphosphate site. Orotate-binding residues include Thr130 and Arg158.

Belongs to the purine/pyrimidine phosphoribosyltransferase family. PyrE subfamily. As to quaternary structure, homodimer. Requires Mg(2+) as cofactor.

It carries out the reaction orotidine 5'-phosphate + diphosphate = orotate + 5-phospho-alpha-D-ribose 1-diphosphate. Its pathway is pyrimidine metabolism; UMP biosynthesis via de novo pathway; UMP from orotate: step 1/2. Its function is as follows. Catalyzes the transfer of a ribosyl phosphate group from 5-phosphoribose 1-diphosphate to orotate, leading to the formation of orotidine monophosphate (OMP). The protein is Orotate phosphoribosyltransferase of Aquifex aeolicus (strain VF5).